Here is a 235-residue protein sequence, read N- to C-terminus: Myc target protein 1 (235 aa).

Residues 95 to 113 (RRRRASAPISQWSSSRRSR) carry the Bipartite nuclear localization signal motif. Phosphoserine occurs at positions 135, 138, 141, and 149.

Belongs to the MYCT1 family. As to expression, down-regulated in gastric cancer tissues.

The protein localises to the nucleus. May regulate certain MYC target genes, MYC seems to be a direct upstream transcriptional activator. Does not seem to significantly affect growth cell capacity. Overexpression seems to mediate many of the known phenotypic features associated with MYC, including promotion of apoptosis, alteration of morphology, enhancement of anchorage-independent growth, tumorigenic conversion, promotion of genomic instability, and inhibition of hematopoietic differentiation. This chain is Myc target protein 1 (MYCT1), found in Homo sapiens (Human).